The chain runs to 63 residues: ATP synthase membrane subunit K, mitochondrial (63 aa).

A helical membrane pass occupies residues T15 to V37.

F-type ATPases have 2 components, CF(1) - the catalytic core - and CF(0) - the membrane proton channel. CF(1) has five subunits: alpha(3), beta(3), gamma(1), delta(1), epsilon(1). CF(0) has three main subunits: a, b and c. The ATP synthase complex/complex V exists as a monomeric and a dimeric supercomplex that helps shape mitochondrial cristae to optimize proton flow.

The protein resides in the mitochondrion membrane. Its function is as follows. Mitochondrial membrane ATP synthase (F(1)F(0) ATP synthase or Complex V) produces ATP from ADP in the presence of a proton gradient across the membrane which is generated by electron transport complexes of the respiratory chain. F-type ATPases consist of two structural domains, F(1) - containing the extramembraneous catalytic core and F(0) - containing the membrane proton channel, linked together by a central stalk and a peripheral stalk. During catalysis, ATP synthesis in the catalytic domain of F(1) is coupled via a rotary mechanism of the central stalk subunits to proton translocation. ATP5MK is a minor subunit of the mitochondrial membrane ATP synthase required for dimerization of the ATP synthase complex and as such regulates ATP synthesis in the mitochondria. The polypeptide is ATP synthase membrane subunit K, mitochondrial (Drosophila melanogaster (Fruit fly)).